Here is a 581-residue protein sequence, read N- to C-terminus: Zinc metalloproteinase nas-36 (581 aa).

The propeptide occupies 1 to 95; that stretch reads MKEIAHSQAY…FRGANEKGKR (95 aa). N67 carries an N-linked (GlcNAc...) asparagine glycan. Positions 97–290 constitute a Peptidase M12A domain; the sequence is AAEYDAKWFQ…IKLINEAYCK (194 aa). Cystine bridges form between C137/C289, C159/C178, C293/C313, C315/C324, and C336/C364. H186 serves as a coordination point for Zn(2+). E187 is an active-site residue. The Zn(2+) site is built by H190 and H196. The EGF-like domain maps to 285–325; the sequence is NEAYCKGDCKEKNECKNGGYLNPSNCQSCLCPSGFGGSKCE. Positions 336–449 constitute a CUB domain; the sequence is CGGTLKAIID…TGFKLKFRKT (114 aa). N418 carries N-linked (GlcNAc...) asparagine glycosylation. The TSP type-1 domain maps to 474–523; the sequence is NDIWSEWGEWSQCSRSCGACGIKSRLRICKTAQCSGKVQQFLTCNLQACP. 3 cysteine pairs are disulfide-bonded: C486–C517, C490–C522, and C502–C507.

It depends on Zn(2+) as a cofactor.

The protein localises to the secreted. Inhibited by 1,10-phenanthroline. Functionally, metalloprotease. Involved in molting, a process during larval stages in which a new cuticle is formed and the old cuticle is shed. This Brugia malayi (Filarial nematode worm) protein is Zinc metalloproteinase nas-36.